The chain runs to 60 residues: UPF0337 protein asr4653 (60 aa).

Belongs to the UPF0337 (CsbD) family.

This chain is UPF0337 protein asr4653, found in Nostoc sp. (strain PCC 7120 / SAG 25.82 / UTEX 2576).